The following is a 196-amino-acid chain: Leucyl/phenylalanyl-tRNA--protein transferase (196 aa).

The protein belongs to the L/F-transferase family.

It localises to the cytoplasm. The enzyme catalyses N-terminal L-lysyl-[protein] + L-leucyl-tRNA(Leu) = N-terminal L-leucyl-L-lysyl-[protein] + tRNA(Leu) + H(+). It carries out the reaction N-terminal L-arginyl-[protein] + L-leucyl-tRNA(Leu) = N-terminal L-leucyl-L-arginyl-[protein] + tRNA(Leu) + H(+). It catalyses the reaction L-phenylalanyl-tRNA(Phe) + an N-terminal L-alpha-aminoacyl-[protein] = an N-terminal L-phenylalanyl-L-alpha-aminoacyl-[protein] + tRNA(Phe). Its function is as follows. Functions in the N-end rule pathway of protein degradation where it conjugates Leu, Phe and, less efficiently, Met from aminoacyl-tRNAs to the N-termini of proteins containing an N-terminal arginine or lysine. This is Leucyl/phenylalanyl-tRNA--protein transferase from Thermosynechococcus vestitus (strain NIES-2133 / IAM M-273 / BP-1).